A 519-amino-acid chain; its full sequence is T-complex protein 11-like protein 2 (519 aa).

The disordered stretch occupies residues 1–30 (MPFNGEKQCVGEDQPSDSDSSRFSESMASL). The residue at position 16 (serine 16) is a Phosphoserine. Positions 17-29 (DSDSSRFSESMAS) are enriched in low complexity.

It belongs to the TCP11 family. In terms of assembly, interacts with FMNL2; this interaction promotes muscle-derived satellite cell (MDSC) migration and differentiation.

Its subcellular location is the cytoplasm. The protein localises to the cytoskeleton. Its function is as follows. Promotes the migration of muscle-derived satellite cells (MDSCs) during differentiation throught interaction with FMNL2 and therefore may participate in microfilament assembly. The chain is T-complex protein 11-like protein 2 from Homo sapiens (Human).